The primary structure comprises 194 residues: Glycerol-3-phosphate acyltransferase 2 (194 aa).

5 consecutive transmembrane segments (helical) span residues 1-21 (MWLL…AYVV), 64-84 (VLAV…LAAL), 112-132 (LAMA…VVIF), 135-155 (YISL…IYFH), and 156-173 (RPWP…LVIY).

The protein belongs to the PlsY family. In terms of assembly, probably interacts with PlsX.

The protein resides in the cell membrane. The enzyme catalyses an acyl phosphate + sn-glycerol 3-phosphate = a 1-acyl-sn-glycero-3-phosphate + phosphate. It functions in the pathway lipid metabolism; phospholipid metabolism. In terms of biological role, catalyzes the transfer of an acyl group from acyl-phosphate (acyl-PO(4)) to glycerol-3-phosphate (G3P) to form lysophosphatidic acid (LPA). This enzyme utilizes acyl-phosphate as fatty acyl donor, but not acyl-CoA or acyl-ACP. The sequence is that of Glycerol-3-phosphate acyltransferase 2 from Moorella thermoacetica (strain ATCC 39073 / JCM 9320).